The following is a 440-amino-acid chain: L-seryl-tRNA(Sec) selenium transferase (440 aa).

Lys282 is modified (N6-(pyridoxal phosphate)lysine).

This sequence belongs to the SelA family. Pyridoxal 5'-phosphate is required as a cofactor.

The protein resides in the cytoplasm. It catalyses the reaction L-seryl-tRNA(Sec) + selenophosphate + H(+) = L-selenocysteinyl-tRNA(Sec) + phosphate. It functions in the pathway aminoacyl-tRNA biosynthesis; selenocysteinyl-tRNA(Sec) biosynthesis; selenocysteinyl-tRNA(Sec) from L-seryl-tRNA(Sec) (bacterial route): step 1/1. In terms of biological role, converts seryl-tRNA(Sec) to selenocysteinyl-tRNA(Sec) required for selenoprotein biosynthesis. The chain is L-seryl-tRNA(Sec) selenium transferase from Campylobacter jejuni (strain RM1221).